A 76-amino-acid polypeptide reads, in one-letter code: Large ribosomal subunit protein uL29 (76 aa).

Belongs to the universal ribosomal protein uL29 family.

The protein is Large ribosomal subunit protein uL29 of Corynebacterium glutamicum (strain R).